A 24-amino-acid chain; its full sequence is SLGGKPDLRPCHPPCHYIPRPKPR.

Residues 1–10 (SLGGKPDLRP) show a composition bias toward basic and acidic residues. The tract at residues 1–24 (SLGGKPDLRPCHPPCHYIPRPKPR) is disordered. Cys11 and Cys15 are disulfide-bonded.

The protein belongs to the waglerin family. As to quaternary structure, waglerin-1 is monomeric. Post-translationally, amidation of the waglerin-1 C-terminus increases the affinity by 2-fold. As to expression, expressed by the venom gland.

The protein resides in the secreted. Functionally, waglerin-1 selectively blocks the epsilon subunit of muscle nicotinic acetylcholine receptor (nAChR). Also has effects on rodent ionotropic GABA(A) receptors (GABR), since it potentiates I(GABA) in some neurons and depresses I(GABA) in others. In mice, it elicits tachypnea, ocular proptosis, rapid collapse and spasms, whereas no toxic effects on respiration and blood pressure are observed in rats. Waglerin-3 selectively blocks the epsilon subunit of muscle nicotinic acetylcholine receptor (nAChR). It elicits tachypnea, ocular proptosis, rapid collapse and spasms in mice. It causes death by respiratory failure. In Tropidolaemus wagleri (Wagler's pit viper), this protein is Waglerin-3.